The chain runs to 252 residues: tRNA pseudouridine synthase A (252 aa).

The active-site Nucleophile is the Asp52. Substrate is bound at residue Tyr110.

It belongs to the tRNA pseudouridine synthase TruA family. Homodimer.

It carries out the reaction uridine(38/39/40) in tRNA = pseudouridine(38/39/40) in tRNA. Formation of pseudouridine at positions 38, 39 and 40 in the anticodon stem and loop of transfer RNAs. This is tRNA pseudouridine synthase A from Blochmanniella floridana.